A 226-amino-acid polypeptide reads, in one-letter code: Chalcone--flavanone isomerase (226 aa).

Substrate is bound by residues Thr51, Asn116, and Ser194.

It belongs to the chalcone isomerase family.

The catalysed reaction is a chalcone = a flavanone.. Its pathway is secondary metabolite biosynthesis; flavonoid biosynthesis. Catalyzes the intramolecular cyclization of bicyclic chalcones into tricyclic (S)-flavanones. Responsible for the isomerization of 4,2',4',6'-tetrahydroxychalcone (also termed chalcone) into naringenin. The protein is Chalcone--flavanone isomerase (CHI) of Canna generalis (Canna lily).